A 172-amino-acid chain; its full sequence is Monopolar attachment protein 1 (172 aa).

The span at 15 to 30 (KKNKNPKISNSKKKNS) shows a compositional bias: basic residues. The tract at residues 15-43 (KKNKNPKISNSKKKNSTRPALQDKTNQTL) is disordered. The segment covering 31-43 (TRPALQDKTNQTL) has biased composition (polar residues). The short motif at 100 to 102 (STP) is the POLO box domain (PBD)-binding element.

As to quaternary structure, interacts with rec8, Interacts with plo1.

It localises to the nucleus. The protein resides in the chromosome. The protein localises to the centromere. Its subcellular location is the kinetochore. In terms of biological role, plays an important role in chromosome segregation during meiosis I by allowing meiotic rec8 to establish cohesion at the centromeric central core and thereby promote the side-by-side structure of kinetochores at meiosis I. Enables monopolar attachment during meiosis I. Required to facilitate kinetochore mono-orientation during meiosis I, when kinetochores on sister chromosomes face the same direction and are thus captured and pulled by spindle fibers from the same pole. Acts in collaboration with plo1. The polypeptide is Monopolar attachment protein 1 (moa1) (Schizosaccharomyces pombe (strain 972 / ATCC 24843) (Fission yeast)).